Consider the following 58-residue polypeptide: UPF0391 membrane protein Patl_4137 (58 aa).

2 consecutive transmembrane segments (helical) span residues 4–24 (WALT…GGIA) and 27–47 (AAGI…LSLV).

This sequence belongs to the UPF0391 family.

Its subcellular location is the cell membrane. The sequence is that of UPF0391 membrane protein Patl_4137 from Pseudoalteromonas atlantica (strain T6c / ATCC BAA-1087).